Here is a 373-residue protein sequence, read N- to C-terminus: 4-hydroxy-3-methylbut-2-en-1-yl diphosphate synthase (flavodoxin) (373 aa).

Positions 270, 273, 305, and 312 each coordinate [4Fe-4S] cluster.

It belongs to the IspG family. [4Fe-4S] cluster is required as a cofactor.

It carries out the reaction (2E)-4-hydroxy-3-methylbut-2-enyl diphosphate + oxidized [flavodoxin] + H2O + 2 H(+) = 2-C-methyl-D-erythritol 2,4-cyclic diphosphate + reduced [flavodoxin]. Its pathway is isoprenoid biosynthesis; isopentenyl diphosphate biosynthesis via DXP pathway; isopentenyl diphosphate from 1-deoxy-D-xylulose 5-phosphate: step 5/6. Its function is as follows. Converts 2C-methyl-D-erythritol 2,4-cyclodiphosphate (ME-2,4cPP) into 1-hydroxy-2-methyl-2-(E)-butenyl 4-diphosphate. The protein is 4-hydroxy-3-methylbut-2-en-1-yl diphosphate synthase (flavodoxin) of Pectobacterium carotovorum subsp. carotovorum (strain PC1).